The sequence spans 116 residues: MKLTMDKIDGMLIACLQGVVNSANAEQLEAELAAQVDKGERRVVLDLGRLDYISSAGLRVVLLVAKQLRQVQGELVLCELKPHVREVFEISGFLSIFPVANSREAAAAAFKTALPR.

Residues 1 to 110 (MKLTMDKIDG…NSREAAAAAF (110 aa)) enclose the STAS domain. Ser55 bears the Phosphoserine; by BtrW mark.

Belongs to the anti-sigma-factor antagonist family. In terms of assembly, interacts with BtrW. Phosphorylated by BtrW. Dephosphorylated by BtrU.

Its function is as follows. Possible positive regulator of sigma-B activity. Non-phosphorylated BtrV binds to BtrW, preventing its association with an unknown partner(s) that might be sigma-B. When phosphorylated, releases BtrW, which is then free to complex with and inactivate its partner. Involved in type III secretion system (T3SS). In Bordetella bronchiseptica (strain ATCC BAA-588 / NCTC 13252 / RB50) (Alcaligenes bronchisepticus), this protein is Putative anti-sigma factor antagonist BtrV (btrV).